The primary structure comprises 101 residues: NAD(P)H-quinone oxidoreductase subunit 4L, chloroplastic (101 aa).

3 helical membrane-spanning segments follow: residues Ile2–Ile22, Met32–Phe52, and Ile61–Val81.

The protein belongs to the complex I subunit 4L family. As to quaternary structure, NDH is composed of at least 16 different subunits, 5 of which are encoded in the nucleus.

The protein resides in the plastid. It is found in the chloroplast thylakoid membrane. The enzyme catalyses a plastoquinone + NADH + (n+1) H(+)(in) = a plastoquinol + NAD(+) + n H(+)(out). It catalyses the reaction a plastoquinone + NADPH + (n+1) H(+)(in) = a plastoquinol + NADP(+) + n H(+)(out). In terms of biological role, NDH shuttles electrons from NAD(P)H:plastoquinone, via FMN and iron-sulfur (Fe-S) centers, to quinones in the photosynthetic chain and possibly in a chloroplast respiratory chain. The immediate electron acceptor for the enzyme in this species is believed to be plastoquinone. Couples the redox reaction to proton translocation, and thus conserves the redox energy in a proton gradient. The protein is NAD(P)H-quinone oxidoreductase subunit 4L, chloroplastic of Nicotiana sylvestris (Wood tobacco).